Here is a 396-residue protein sequence, read N- to C-terminus: Pinosylvin synthase 1 (396 aa).

Substrate is bound at residue 60–63 (KFKR). Cys-170 is a catalytic residue. Residues Leu-273 and 311–313 (GGH) contribute to the substrate site.

Belongs to the thiolase-like superfamily. Chalcone/stilbene synthases family. As to quaternary structure, homodimer.

The protein resides in the cytoplasm. It catalyses the reaction (E)-cinnamoyl-CoA + 3 malonyl-CoA + 3 H(+) = (E)-pinosylvin + 4 CO2 + 4 CoA. It carries out the reaction 3-phenylpropanoyl-CoA + 3 malonyl-CoA + 3 H(+) = dihydropinosylvin + 4 CO2 + 4 CoA. It functions in the pathway phytoalexin biosynthesis; pinosylvin biosynthesis. Its function is as follows. Catalyzes the production of pinosylvin from cinnamoyl-CoA and malonyl-CoA, and dihydropinosylvin from dihydrocinnamoyl-CoA. This is Pinosylvin synthase 1 from Pinus strobus (Eastern white pine).